A 717-amino-acid polypeptide reads, in one-letter code: Ribosomal RNA large subunit methyltransferase K/L (717 aa).

One can recognise a THUMP domain in the interval 44–155 (DAYKVCIYSY…KQFVNVFLCL (112 aa)).

It belongs to the methyltransferase superfamily. RlmKL family.

It is found in the cytoplasm. The enzyme catalyses guanosine(2445) in 23S rRNA + S-adenosyl-L-methionine = N(2)-methylguanosine(2445) in 23S rRNA + S-adenosyl-L-homocysteine + H(+). It catalyses the reaction guanosine(2069) in 23S rRNA + S-adenosyl-L-methionine = N(2)-methylguanosine(2069) in 23S rRNA + S-adenosyl-L-homocysteine + H(+). Its function is as follows. Specifically methylates the guanine in position 2445 (m2G2445) and the guanine in position 2069 (m7G2069) of 23S rRNA. The protein is Ribosomal RNA large subunit methyltransferase K/L of Francisella tularensis subsp. holarctica (strain FTNF002-00 / FTA).